Reading from the N-terminus, the 284-residue chain is Ubiquitin thioesterase otubain-like (284 aa).

Residues 77–274 (GEIRYIRGDG…PGHYDVIYKK (198 aa)) enclose the OTU domain. Asp-85 is an active-site residue. Cys-88 (nucleophile) is an active-site residue. Substrate is bound at residue Ile-176. Residues His-245 and His-267 contribute to the active site.

This sequence belongs to the peptidase C65 family.

It catalyses the reaction Thiol-dependent hydrolysis of ester, thioester, amide, peptide and isopeptide bonds formed by the C-terminal Gly of ubiquitin (a 76-residue protein attached to proteins as an intracellular targeting signal).. Hydrolase that can remove conjugated ubiquitin from proteins and plays an important regulatory role at the level of protein turnover by preventing degradation. Specifically cleaves 'Lys-48'-linked polyubiquitin. This Caenorhabditis elegans protein is Ubiquitin thioesterase otubain-like (otub-1).